The chain runs to 185 residues: MSNTASLKKEYAERIAPALKNQFQYSSTMQIPVLKKIVINQGLGMAVADKKIIEVAINELTAITGQKAVATVSRKDIANFKLRKKMPIGVMVTLRRERMYEFLEKLVRVALPRIRDFKGIESKFDGRGNYTLGIQEQIIFPEINIDSITKILGMNITFVTSAPTDEEGYALLKEFGLPFKNSKKD.

The protein belongs to the universal ribosomal protein uL5 family. In terms of assembly, part of the 50S ribosomal subunit; part of the 5S rRNA/L5/L18/L25 subcomplex. Contacts the 5S rRNA and the P site tRNA. Forms a bridge to the 30S subunit in the 70S ribosome.

Functionally, this is one of the proteins that bind and probably mediate the attachment of the 5S RNA into the large ribosomal subunit, where it forms part of the central protuberance. In the 70S ribosome it contacts protein S13 of the 30S subunit (bridge B1b), connecting the 2 subunits; this bridge is implicated in subunit movement. Contacts the P site tRNA; the 5S rRNA and some of its associated proteins might help stabilize positioning of ribosome-bound tRNAs. The chain is Large ribosomal subunit protein uL5 from Phocaeicola vulgatus (strain ATCC 8482 / DSM 1447 / JCM 5826 / CCUG 4940 / NBRC 14291 / NCTC 11154) (Bacteroides vulgatus).